A 345-amino-acid chain; its full sequence is Opioid-binding protein/cell adhesion molecule (345 aa).

An N-terminal signal peptide occupies residues 1 to 27 (MGVCGSLFQPWKCLVVVSLRLLFLVPT). 3 consecutive Ig-like C2-type domains span residues 39–126 (PKAM…PKTS), 136–219 (PQIM…VKIT), and 223–310 (PPYI…ASIT). N44, N70, and N140 each carry an N-linked (GlcNAc...) asparagine glycan. A disulfide bridge links C57 with C115. Disulfide bonds link C157–C202 and C244–C296. N-linked (GlcNAc...) asparagine glycans are attached at residues N285, N293, and N306. N322 is lipidated: GPI-anchor amidated asparagine. The propeptide at 323–345 (SASRALACLWLSGTLFAHFFIKF) is removed in mature form.

Belongs to the immunoglobulin superfamily. IgLON family.

The protein resides in the cell membrane. Its function is as follows. Binds opioids in the presence of acidic lipids; probably involved in cell contact. This is Opioid-binding protein/cell adhesion molecule (OPCML) from Bos taurus (Bovine).